Consider the following 399-residue polypeptide: Glutathione-independent formaldehyde dehydrogenase (399 aa).

Residue Cys47 coordinates Zn(2+). The NAD(+) site is built by Gly48, Ser49, and His52. His68, Cys98, Cys101, Cys104, Cys112, and Asp170 together coordinate Zn(2+). NAD(+) is bound by residues Val198, Asp218, Arg223, Val263, Arg268, Pro300, Gln338, and Thr339.

It belongs to the zinc-containing alcohol dehydrogenase family. As to quaternary structure, homotetramer. Zn(2+) serves as cofactor.

The catalysed reaction is formaldehyde + NAD(+) + H2O = formate + NADH + 2 H(+). The enzyme catalyses acetaldehyde + NAD(+) + H2O = acetate + NADH + 2 H(+). In terms of biological role, dehydrogenase that catalyzes the NAD(+)-dependent oxidation of formaldehyde and acetaldehyde. Shows no detectable activity against either aldehydes with longer carbon chains or ethanol. This is Glutathione-independent formaldehyde dehydrogenase from Pseudomonas aeruginosa (strain LESB58).